The sequence spans 511 residues: Exodeoxyribonuclease 7 large subunit (511 aa).

This sequence belongs to the XseA family. In terms of assembly, heterooligomer composed of large and small subunits.

The protein resides in the cytoplasm. It catalyses the reaction Exonucleolytic cleavage in either 5'- to 3'- or 3'- to 5'-direction to yield nucleoside 5'-phosphates.. Bidirectionally degrades single-stranded DNA into large acid-insoluble oligonucleotides, which are then degraded further into small acid-soluble oligonucleotides. The polypeptide is Exodeoxyribonuclease 7 large subunit (Brucella melitensis biotype 1 (strain ATCC 23456 / CCUG 17765 / NCTC 10094 / 16M)).